Reading from the N-terminus, the 314-residue chain is uncharacterized protein (314 aa).

Positions 1 to 18 are cleaved as a signal peptide; that stretch reads MLIQILFLIILTLNCSYS. Residues Asn68, Asn72, Asn106, and Asn256 are each glycosylated (N-linked (GlcNAc...) asparagine).

It localises to the secreted. This is an uncharacterized protein from Caenorhabditis elegans.